The primary structure comprises 207 residues: Tereporin-Ts1 (207 aa).

Positions 1-11 (VIFALVLGNAS) are cleaved as a signal peptide. The tract at residues 35-54 (SAGTSLASTILSGLAASGYR) is N-terminal region. Residues Gly-111, Ser-129, Pro-131, Tyr-164, and Tyr-165 each contribute to the phosphocholine site.

Belongs to the actinoporin family. Conoidea subfamily. In terms of assembly, octamer or nonamer in membranes. Monomer in the soluble state. As to expression, expressed by the venom duct.

It localises to the secreted. It is found in the nematocyst. The protein localises to the target cell membrane. In terms of biological role, pore-forming protein that forms pores of around 1 nm and causes cardiac stimulation and cytolysis. The sequence is that of Tereporin-Ts1 from Terebra subulata (Chocolate spotted auger).